A 153-amino-acid chain; its full sequence is Zinc finger protein GIS2 (153 aa).

7 consecutive CCHC-type zinc fingers follow at residues 4–21 (KACY…DCDS), 23–40 (RLCY…DCTM), 47–64 (KQCY…ECTV), 65–82 (QRCF…ECPE), 92–109 (VSCY…DCMK), 116–133 (LKCY…DCQN), and 135–152 (RLCY…DCPK).

The protein localises to the cytoplasm. Functionally, may act in the sexual differentiation pathway. The chain is Zinc finger protein GIS2 (GIS2) from Saccharomyces cerevisiae (strain ATCC 204508 / S288c) (Baker's yeast).